The chain runs to 614 residues: Vitamin B12 transporter BtuB (614 aa).

A signal peptide spans 1-20 (MIKKATLLTAFSVTAFSAWA). A TonB box motif is present at residues 26–33 (DTLVVTAN). The 115-residue stretch at 38 to 152 (PRSAVLAPVT…IGGVVNIITT (115 aa)) folds into the TBDR plug domain. Cyanocob(III)alamin contacts are provided by residues serine 85, asparagine 92, and 110–111 (VS). One can recognise a TBDR beta-barrel domain in the interval 155-614 (NPGTELTAGW…EYTLSGSYTF (460 aa)). Transmembrane regions (beta stranded) follow at residues 158-165 (TELTAGWG), 169-178 (YQNYDISTQQ), and 184-195 (TRATLIGDYEYT). Aspartate 199, glutamine 211, aspartate 213, and aspartate 215 together coordinate Ca(2+). 2 consecutive transmembrane segments (beta stranded) span residues 217 to 227 (FLSKTLYGALE) and 232 to 248 (DRWSGFVRGYGYDNRTD). The Ca(2+) site is built by tyrosine 249 and aspartate 250. Position 251 (alanine 251) interacts with cyanocob(III)alamin. Ca(2+) is bound at residue aspartate 261. 14 consecutive transmembrane segments (beta stranded) span residues 263–277 (RKLYSQSWDAGLHFN), 279–296 (ERIQSQLVSSYSHSKDYN), 309–325 (TLDEMKQYNVQWTNSVV), 328–337 (HGNVGAGVDW), 353–369 (YDQRNTGVYLTGLQQLG), 371–381 (FTLEAAARSDD), 385–400 (FGRHGTWQTSAGWEFI), 403–417 (YRFIASYGTSYKAPN), 434–443 (KSKQWEGAFE), 449–458 (VSWRISGYRN), 473–490 (YYNEGKARIKGIEATANF), 494–509 (PLTHTVSYDYVDARNA), 517–529 (RRSKQMAKYQLDW), and 535–550 (DWGMTYQYLGSRYDSD). Threonine 309 lines the cyanocob(III)alamin pocket. Arginine 517 contributes to the cyanocob(III)alamin binding site. Tyrosine 551 provides a ligand contact to cyanocob(III)alamin. Beta stranded transmembrane passes span 558 to 572 (TVKMGGVSLWDLTVA), 585 to 596 (IANLFDKDYETV), and 602 to 614 (AGREYTLSGSYTF). A TonB C-terminal box motif is present at residues 597–614 (YGYQTAGREYTLSGSYTF).

It belongs to the TonB-dependent receptor family. BtuB (TC 1.B.14.3.1) subfamily.

The protein resides in the cell outer membrane. Functionally, involved in the active translocation of vitamin B12 (cyanocobalamin) across the outer membrane to the periplasmic space. It derives its energy for transport by interacting with the trans-periplasmic membrane protein TonB. This chain is Vitamin B12 transporter BtuB, found in Salmonella typhimurium (strain LT2 / SGSC1412 / ATCC 700720).